Reading from the N-terminus, the 311-residue chain is tRNA dimethylallyltransferase (311 aa).

Residue 10–17 participates in ATP binding; the sequence is GPTASGKT. 12–17 is a binding site for substrate; sequence TASGKT. 3 interaction with substrate tRNA regions span residues 35 to 38, 159 to 163, and 240 to 245; these read DSAL, QRINR, and RCVGYR.

This sequence belongs to the IPP transferase family. As to quaternary structure, monomer. Requires Mg(2+) as cofactor.

The catalysed reaction is adenosine(37) in tRNA + dimethylallyl diphosphate = N(6)-dimethylallyladenosine(37) in tRNA + diphosphate. Its function is as follows. Catalyzes the transfer of a dimethylallyl group onto the adenine at position 37 in tRNAs that read codons beginning with uridine, leading to the formation of N6-(dimethylallyl)adenosine (i(6)A). This chain is tRNA dimethylallyltransferase, found in Haemophilus influenzae (strain PittEE).